The following is a 375-amino-acid chain: Alcohol dehydrogenase B (375 aa).

The Zn(2+) site is built by C40, H62, C92, C95, C98, C106, and C169.

The protein belongs to the zinc-containing alcohol dehydrogenase family. The cofactor is Zn(2+).

The protein resides in the cytoplasm. The catalysed reaction is a primary alcohol + NAD(+) = an aldehyde + NADH + H(+). The enzyme catalyses a secondary alcohol + NAD(+) = a ketone + NADH + H(+). In Mycobacterium bovis (strain ATCC BAA-935 / AF2122/97), this protein is Alcohol dehydrogenase B (adhB).